A 72-amino-acid chain; its full sequence is Gas vesicle protein A (72 aa).

It belongs to the gas vesicle GvpA family. In terms of assembly, the gas vesicle shell is 2 nm thick and consists of a single layer of this protein. It forms helical ribs nearly perpendicular to the long axis of the vesicle.

The protein resides in the gas vesicle shell. Functionally, gas vesicles are hollow, gas filled proteinaceous nanostructures found in some microorganisms. During planktonic growth they allow positioning of the organism at a favorable depth for light or nutrient acquisition. GvpA forms the protein shell. The chain is Gas vesicle protein A from Haloquadratum walsbyi (strain DSM 16790 / HBSQ001).